The following is a 725-amino-acid chain: Methionine--tRNA ligase (725 aa).

A 'HIGH' region motif is present at residues 27–37; sequence PYANGQIHIGH. Zn(2+) is bound by residues cysteine 158, cysteine 161, cysteine 171, and cysteine 174. Positions 348-352 match the 'KMSKS' region motif; it reads KMSKS. Residue lysine 351 participates in ATP binding. One can recognise a tRNA-binding domain in the interval 619 to 725; the sequence is DFAKIDLRIA…SGAKPGMRVK (107 aa).

Belongs to the class-I aminoacyl-tRNA synthetase family. MetG type 1 subfamily. In terms of assembly, homodimer. It depends on Zn(2+) as a cofactor.

The protein resides in the cytoplasm. The enzyme catalyses tRNA(Met) + L-methionine + ATP = L-methionyl-tRNA(Met) + AMP + diphosphate. Functionally, is required not only for elongation of protein synthesis but also for the initiation of all mRNA translation through initiator tRNA(fMet) aminoacylation. This is Methionine--tRNA ligase from Burkholderia mallei (strain NCTC 10247).